Reading from the N-terminus, the 217-residue chain is N-(5'-phosphoribosyl)anthranilate isomerase (217 aa).

Belongs to the TrpF family.

The enzyme catalyses N-(5-phospho-beta-D-ribosyl)anthranilate = 1-(2-carboxyphenylamino)-1-deoxy-D-ribulose 5-phosphate. Its pathway is amino-acid biosynthesis; L-tryptophan biosynthesis; L-tryptophan from chorismate: step 3/5. This Acaryochloris marina (strain MBIC 11017) protein is N-(5'-phosphoribosyl)anthranilate isomerase.